We begin with the raw amino-acid sequence, 180 residues long: Regulator of G-protein signaling 8 (180 aa).

Ser-26 carries the phosphoserine modification. In terms of domain architecture, RGS spans 56–171 (SFDVLLSHKY…FLRSKMYLDL (116 aa)).

In terms of assembly, interacts with GNAO1 and GNAI3.

It localises to the cell membrane. The protein localises to the membrane. Its subcellular location is the perikaryon. It is found in the cell projection. The protein resides in the dendrite. It localises to the nucleus. Functionally, regulates G protein-coupled receptor signaling cascades, including signaling via muscarinic acetylcholine receptor CHRM2 and dopamine receptor DRD2. Inhibits signal transduction by increasing the GTPase activity of G protein alpha subunits, thereby driving them into their inactive GDP-bound form. Modulates the activity of potassium channels that are activated in response to DRD2 and CHRM2 signaling. In Mus musculus (Mouse), this protein is Regulator of G-protein signaling 8 (Rgs8).